Consider the following 239-residue polypeptide: Ribosomal RNA small subunit methyltransferase G (239 aa).

Residues G78, F83, 129–130 (AE), and R148 each bind S-adenosyl-L-methionine.

Belongs to the methyltransferase superfamily. RNA methyltransferase RsmG family.

The protein resides in the cytoplasm. Functionally, specifically methylates the N7 position of a guanine in 16S rRNA. The sequence is that of Ribosomal RNA small subunit methyltransferase G from Clostridium perfringens (strain SM101 / Type A).